Here is a 291-residue protein sequence, read N- to C-terminus: Gamma-soluble NSF attachment protein (291 aa).

Belongs to the SNAP family.

It localises to the membrane. Its function is as follows. Required for vesicular transport between the endoplasmic reticulum and the Golgi apparatus. Binds to SNARE complex and then recruits NSF to disassemble it. This chain is Gamma-soluble NSF attachment protein (GSNAP), found in Arabidopsis thaliana (Mouse-ear cress).